A 288-amino-acid chain; its full sequence is Aminoglycoside 6-adenylyltransferase (288 aa).

The catalysed reaction is streptomycin + ATP = 6-O-adenylylstreptomycin + diphosphate. Its function is as follows. Mediates bacterial resistance to streptomycin, is probably a streptomycin 6-adenylyltransferase. In Campylobacter jejuni, this protein is Aminoglycoside 6-adenylyltransferase.